The primary structure comprises 346 residues: Pyrophosphate--fructose 6-phosphate 1-phosphotransferase (346 aa).

Gly-13 contacts diphosphate. Glu-105 contributes to the Mg(2+) binding site. Substrate contacts are provided by residues 127–129, Arg-164, 171–173, Glu-224, Arg-269, and 275–278; these read TID, MGR, and HLQR. The Proton acceptor role is filled by Asp-129.

It belongs to the phosphofructokinase type A (PFKA) family. Mixed-substrate PFK group III subfamily. Homodimer. Mg(2+) is required as a cofactor.

It localises to the cytoplasm. It carries out the reaction beta-D-fructose 6-phosphate + diphosphate = beta-D-fructose 1,6-bisphosphate + phosphate + H(+). The protein operates within carbohydrate degradation; glycolysis; D-glyceraldehyde 3-phosphate and glycerone phosphate from D-glucose: step 3/4. With respect to regulation, non-allosteric. Its function is as follows. Catalyzes the phosphorylation of D-fructose 6-phosphate, the first committing step of glycolysis. Uses inorganic phosphate (PPi) as phosphoryl donor instead of ATP like common ATP-dependent phosphofructokinases (ATP-PFKs), which renders the reaction reversible, and can thus function both in glycolysis and gluconeogenesis. Consistently, PPi-PFK can replace the enzymes of both the forward (ATP-PFK) and reverse (fructose-bisphosphatase (FBPase)) reactions. This Dictyoglomus thermophilum protein is Pyrophosphate--fructose 6-phosphate 1-phosphotransferase.